Here is a 152-residue protein sequence, read N- to C-terminus: Acidic phospholipase A2 1 (152 aa).

An N-terminal signal peptide occupies residues 1-19 (MNPAYFLVLAAVCVSLLGA). Residues 20–27 (ANIPPQPL) constitute a propeptide that is removed on maturation. Cystine bridges form between Cys38/Cys104, Cys54/Cys151, Cys56/Cys72, Cys71/Cys132, Cys78/Cys125, Cys88/Cys118, and Cys111/Cys123. Tyr55, Gly57, and Gly59 together coordinate Ca(2+). Residue His75 is part of the active site. Asp76 lines the Ca(2+) pocket. The active site involves Asp126.

This sequence belongs to the phospholipase A2 family. Group I subfamily. D49 sub-subfamily. The cofactor is Ca(2+). Expressed by the venom gland.

It is found in the secreted. The enzyme catalyses a 1,2-diacyl-sn-glycero-3-phosphocholine + H2O = a 1-acyl-sn-glycero-3-phosphocholine + a fatty acid + H(+). Its function is as follows. PLA2 catalyzes the calcium-dependent hydrolysis of the 2-acyl groups in 3-sn-phosphoglycerides. The sequence is that of Acidic phospholipase A2 1 from Bungarus candidus (Malayan krait).